A 306-amino-acid polypeptide reads, in one-letter code: Homoserine kinase (306 aa).

Pro88–Thr98 is a binding site for ATP.

It belongs to the GHMP kinase family. Homoserine kinase subfamily.

The protein resides in the cytoplasm. It catalyses the reaction L-homoserine + ATP = O-phospho-L-homoserine + ADP + H(+). The protein operates within amino-acid biosynthesis; L-threonine biosynthesis; L-threonine from L-aspartate: step 4/5. In terms of biological role, catalyzes the ATP-dependent phosphorylation of L-homoserine to L-homoserine phosphate. The polypeptide is Homoserine kinase (Synechococcus sp. (strain ATCC 27144 / PCC 6301 / SAUG 1402/1) (Anacystis nidulans)).